A 262-amino-acid polypeptide reads, in one-letter code: Small ribosomal subunit protein uS2 (262 aa).

This sequence belongs to the universal ribosomal protein uS2 family.

The protein is Small ribosomal subunit protein uS2 of Roseiflexus sp. (strain RS-1).